The sequence spans 64 residues: Large ribosomal subunit protein bL35 (64 aa).

Residues 1-15 (MPKSKTHSGTAKRFK) show a composition bias toward basic residues. Residues 1–23 (MPKSKTHSGTAKRFKVSGSGKIL) are disordered.

Belongs to the bacterial ribosomal protein bL35 family.

The chain is Large ribosomal subunit protein bL35 from Rhodococcus jostii (strain RHA1).